A 550-amino-acid polypeptide reads, in one-letter code: Glycosyltransferase-like protein gnt12 (550 aa).

Positions 1-29 are disordered; that stretch reads MSYLPLYNNNNNINNNNNNNNNRINNNKE. At 1-36 the chain is on the cytoplasmic side; sequence MSYLPLYNNNNNINNNNNNNNNRINNNKEKGVKNKP. Low complexity predominate over residues 8-25; it reads NNNNNINNNNNNNNNRIN. Residues 37 to 57 traverse the membrane as a helical; Signal-anchor for type II membrane protein segment; sequence FQIFISIVFIVFLCFFLIWSM. Topologically, residues 58–550 are extracellular; the sequence is EAKKDKNIKI…LFNEPLTNEC (493 aa). The span at 81–97 shows a compositional bias: low complexity; sequence LINEPINNNKNNKNNIP. The tract at residues 81–100 is disordered; it reads LINEPINNNKNNKNNIPKNH. N233, N322, and N426 each carry an N-linked (GlcNAc...) asparagine glycan.

The protein belongs to the glycosyltransferase 8 family. Highly divergent.

Its subcellular location is the membrane. The protein is Glycosyltransferase-like protein gnt12 (gnt12) of Dictyostelium discoideum (Social amoeba).